We begin with the raw amino-acid sequence, 30 residues long: Cyclotide mden-I (30 aa).

The segment at residues 1–30 (GIPCGESCVYIPCITTAIGCSCKNKVCYRN) is a cross-link (cyclopeptide (Gly-Asn)). Disulfide bonds link Cys4-Cys20, Cys8-Cys22, and Cys13-Cys27.

The protein belongs to the cyclotide family. Bracelet subfamily. Post-translationally, this is a cyclic peptide.

Functionally, probably participates in a plant defense mechanism. This chain is Cyclotide mden-I, found in Melicytus dentatus (Tree violet).